Consider the following 404-residue polypeptide: MNQTPKLNSFRAGPDEDGRFGIYGGRFVAETLMPLILDLQEEWEKAKNDPAFQAELKSLGTHYIGRPSPLYFAERLTAELGGAKIYFKREELNHTGSHKINNCIGQILLAKRMGKTRIIAETGAGQHGVASATVAARFGLPCVVYMGATDVERQAPNVFRMKLLGAEVIPVTAGSGTLKDAMNEALRDWVTNVDDTYYLIGTAAGPHPYPEMVRDFQAVIGTEAKQQMLEAEGRLPDLVIAAVGGGSNAIGIFHPFLDDESVKIVGVEAGGKGLQGDEHCASITAGSPGVLHGNRTYLLQDGDGQIKEGHSISAGLDYPGIGPEHSWLNDIGRAEYVPIMDHEALEAFQTLTRLEGIIPALEPSHALAEVIKRAPKMGKDEIILMNLSGRGDKDIFTVAKILGM.

Lys-99 is subject to N6-(pyridoxal phosphate)lysine.

It belongs to the TrpB family. As to quaternary structure, tetramer of two alpha and two beta chains. It depends on pyridoxal 5'-phosphate as a cofactor.

The catalysed reaction is (1S,2R)-1-C-(indol-3-yl)glycerol 3-phosphate + L-serine = D-glyceraldehyde 3-phosphate + L-tryptophan + H2O. Its pathway is amino-acid biosynthesis; L-tryptophan biosynthesis; L-tryptophan from chorismate: step 5/5. Its function is as follows. The beta subunit is responsible for the synthesis of L-tryptophan from indole and L-serine. In Rhizobium rhizogenes (strain K84 / ATCC BAA-868) (Agrobacterium radiobacter), this protein is Tryptophan synthase beta chain.